Reading from the N-terminus, the 327-residue chain is Aldo-keto reductase family 1 member A1 (327 aa).

NADP(+) is bound by residues 13–22 (GQKIPLIGLG), Thr-23, Trp-24, and Asp-47. Tyr-52 (proton donor) is an active-site residue. NADP(+) contacts are provided by Ser-164, Asn-165, Ser-213, Leu-215, Ser-217, Lys-265, Ser-266, Val-267, Thr-268, Arg-271, Gln-274, and Asn-275.

Belongs to the aldo/keto reductase family.

The protein resides in the cytoplasm. Its subcellular location is the cytosol. It localises to the apical cell membrane. The enzyme catalyses a primary alcohol + NADP(+) = an aldehyde + NADPH + H(+). It carries out the reaction S-nitroso-CoA + NADPH + H(+) = sulfinamide-CoA + NADP(+). The catalysed reaction is S-nitrosoglutathione + NADPH + H(+) = S-(hydroxysulfenamide)glutathione + NADP(+). Catalyzes the NADPH-dependent reduction of a wide variety of carbonyl-containing compounds to their corresponding alcohols. Displays enzymatic activity towards endogenous metabolites such as aromatic and aliphatic aldehydes, ketones, monosaccharides and bile acids. Acts as an aldehyde-detoxification enzyme. Also acts as an inhibitor of protein S-nitrosylation by mediating degradation of S-nitroso-coenzyme A (S-nitroso-CoA), a cofactor required to S-nitrosylate proteins. Also acts as a S-nitroso-glutathione reductase by catalyzing the NADPH-dependent reduction of S-nitrosoglutathione. Displays no reductase activity towards retinoids. The polypeptide is Aldo-keto reductase family 1 member A1 (AKR1A1) (Gallus gallus (Chicken)).